The primary structure comprises 387 residues: 1-deoxy-D-xylulose 5-phosphate reductoisomerase (387 aa).

5 residues coordinate NADPH: threonine 10, glycine 11, isoleucine 13, asparagine 38, and asparagine 122. Lysine 123 provides a ligand contact to 1-deoxy-D-xylulose 5-phosphate. NADPH is bound at residue glutamate 124. Residue aspartate 148 participates in Mn(2+) binding. 1-deoxy-D-xylulose 5-phosphate is bound by residues serine 149, glutamate 150, serine 174, and histidine 197. Glutamate 150 is a Mn(2+) binding site. Residue glycine 203 coordinates NADPH. Positions 210, 215, 216, and 219 each coordinate 1-deoxy-D-xylulose 5-phosphate. Mn(2+) is bound at residue glutamate 219.

This sequence belongs to the DXR family. Mg(2+) serves as cofactor. The cofactor is Mn(2+).

The catalysed reaction is 2-C-methyl-D-erythritol 4-phosphate + NADP(+) = 1-deoxy-D-xylulose 5-phosphate + NADPH + H(+). Its pathway is isoprenoid biosynthesis; isopentenyl diphosphate biosynthesis via DXP pathway; isopentenyl diphosphate from 1-deoxy-D-xylulose 5-phosphate: step 1/6. Its function is as follows. Catalyzes the NADPH-dependent rearrangement and reduction of 1-deoxy-D-xylulose-5-phosphate (DXP) to 2-C-methyl-D-erythritol 4-phosphate (MEP). The sequence is that of 1-deoxy-D-xylulose 5-phosphate reductoisomerase from Ehrlichia canis (strain Jake).